A 597-amino-acid polypeptide reads, in one-letter code: DDB1- and CUL4-associated factor 8 (597 aa).

Positions 1–24 (MSSKGSSTDGRTDLANGSLSSSPE) are enriched in polar residues. Residues 1–147 (MSSKGSSTDG…DWVSSETSAL (147 aa)) are disordered. 2 positions are modified to phosphoserine: Ser-21 and Ser-22. The Nuclear export signal signature appears at 39-50 (IEVEASDLSLSL). The segment covering 65–99 (RGTDTESSGEDKDSDSMEDTGHYSINDENRVHDRS) has biased composition (basic and acidic residues). Ser-99 carries the post-translational modification Phosphoserine. Acidic residues predominate over residues 100–112 (EEEEEEEEEEEEE). Positions 114–122 (PRRRVQRKR) match the Nuclear localization signal motif. Positions 124 to 137 (NRDQDSSDDERALE) are enriched in basic and acidic residues. Phosphoserine is present on residues Ser-129 and Ser-130. WD repeat units follow at residues 191–230 (GHTG…PVLD), 234–275 (GHKS…CCKN), 281–321 (QHKG…PASK), 329–369 (EKKV…ENEN), 385–424 (ESKA…GAQY), 432–472 (RNNA…IIQF), and 476–515 (DKGG…STEL). At Arg-204 the chain carries Omega-N-methylarginine; by PRMT1. The tract at residues 558–597 (HRRWREPGVGATDADSDESPSSSDTSDEEEGPDRVQCMPS) is disordered.

The protein belongs to the WD repeat DCAF8 family. In terms of assembly, interacts with DDB1, CUL4A and CUL4B. Interacts with KPNA1, KPNB1 and XPO1.

It is found in the nucleus. The protein resides in the cytoplasm. The protein operates within protein modification; protein ubiquitination. Functionally, may function as a substrate receptor for CUL4-DDB1 E3 ubiquitin-protein ligase complex. This is DDB1- and CUL4-associated factor 8 (DCAF8) from Homo sapiens (Human).